The sequence spans 467 residues: Uronate isomerase (467 aa).

It belongs to the metallo-dependent hydrolases superfamily. Uronate isomerase family.

It carries out the reaction D-glucuronate = D-fructuronate. The catalysed reaction is aldehydo-D-galacturonate = keto-D-tagaturonate. Its pathway is carbohydrate metabolism; pentose and glucuronate interconversion. In Haemophilus influenzae (strain 86-028NP), this protein is Uronate isomerase.